We begin with the raw amino-acid sequence, 343 residues long: Geranylgeranyl pyrophosphate synthase 1 (343 aa).

3 residues coordinate isopentenyl diphosphate: Lys-43, Arg-46, and His-75. Positions 82 and 86 each coordinate Mg(2+). Residue Arg-91 coordinates dimethylallyl diphosphate. Arg-92 lines the isopentenyl diphosphate pocket. 3 residues coordinate dimethylallyl diphosphate: Lys-169, Thr-170, and Gln-212. Asp-215 is a Mg(2+) binding site. The dimethylallyl diphosphate site is built by Asn-219, Lys-229, and Lys-239.

Belongs to the FPP/GGPP synthase family. It depends on Mg(2+) as a cofactor.

The enzyme catalyses isopentenyl diphosphate + dimethylallyl diphosphate = (2E)-geranyl diphosphate + diphosphate. The catalysed reaction is isopentenyl diphosphate + (2E)-geranyl diphosphate = (2E,6E)-farnesyl diphosphate + diphosphate. It catalyses the reaction isopentenyl diphosphate + (2E,6E)-farnesyl diphosphate = (2E,6E,10E)-geranylgeranyl diphosphate + diphosphate. In terms of biological role, geranylgeranyl pyrophosphate synthase; part of the gene cluster 4 that mediates the biosynthesis of an isoprenoid secondary metabolite. The sequence is that of Geranylgeranyl pyrophosphate synthase 1 (GGS1) from Zymoseptoria tritici (strain CBS 115943 / IPO323) (Speckled leaf blotch fungus).